Here is a 1060-residue protein sequence, read N- to C-terminus: Bumetanide-sensitive sodium-(potassium)-chloride cotransporter (1060 aa).

The Cytoplasmic portion of the chain corresponds to methionine 1–lysine 122. 2 helical membrane-spanning segments follow: residues leucine 123–phenylalanine 143 and glycine 154–leucine 174. The Cytoplasmic segment spans residues serine 175–serine 197. 2 helical membrane passes run leucine 198–alanine 218 and isoleucine 250–glutamate 270. Residues serine 271–asparagine 275 are Cytoplasmic-facing. A run of 2 helical transmembrane segments spans residues phenylalanine 276–proline 296 and phenylalanine 332–isoleucine 352. Topologically, residues serine 353–threonine 367 are cytoplasmic. The chain crosses the membrane as a helical span at residues leucine 368–glycine 388. Residues asparagine 396, asparagine 404, and asparagine 419 are each glycosylated (N-linked (GlcNAc...) asparagine). The chain crosses the membrane as a helical span at residues valine 432–leucine 452. The Cytoplasmic portion of the chain corresponds to serine 453–leucine 497. Helical transmembrane passes span threonine 498–isoleucine 518 and cysteine 563–phenylalanine 583. At threonine 584–proline 642 the chain is on the cytoplasmic side. Residues alanine 643–isoleucine 663 form a helical membrane-spanning segment. The N-linked (GlcNAc...) asparagine glycan is linked to asparagine 816. Residues threonine 882–isoleucine 902 traverse the membrane as a helical segment. The Cytoplasmic segment spans residues serine 903 to serine 1060.

It belongs to the SLC12A transporter family.

It is found in the membrane. Electrically silent transporter system. Mediates sodium and chloride reabsorption. Plays a vital role in the regulation of ionic balance and cell volume. In Manduca sexta (Tobacco hawkmoth), this protein is Bumetanide-sensitive sodium-(potassium)-chloride cotransporter.